The chain runs to 1601 residues: PH and SEC7 domain-containing protein (1601 aa).

A mediates regulation of axon branching and microtubule organization region spans residues methionine 1–arginine 340. Positions lysine 6–proline 88 constitute a PDZ domain. Disordered regions lie at residues asparagine 113–lysine 192, threonine 211–alanine 322, serine 339–asparagine 440, leucine 459–glycine 657, asparagine 737–alanine 780, glutamine 872–cysteine 965, and glutamine 1040–glutamate 1126. The segment covering histidine 118 to histidine 128 has biased composition (polar residues). Low complexity predominate over residues alanine 166–threonine 191. Positions glutamine 283 to threonine 297 are enriched in polar residues. Positions arginine 300–glutamate 311 are enriched in basic and acidic residues. The short motif at proline 323 to arginine 340 is the Microtubule elimination domain (MTED); Binds tubulin and blocks microtubule polymerization element. Over residues serine 339–leucine 348 the composition is skewed to polar residues. A compositionally biased stretch (basic and acidic residues) spans lysine 353–proline 362. 3 stretches are compositionally biased toward low complexity: residues serine 382–aspartate 399, glutamine 409–glutamine 424, and glutamine 468–tyrosine 487. The segment covering glutamine 488–glutamate 505 has biased composition (acidic residues). Polar residues predominate over residues tyrosine 510–glutamine 519. The segment covering aspartate 526–tyrosine 557 has biased composition (acidic residues). Composition is skewed to polar residues over residues serine 558 to alanine 567 and threonine 617 to threonine 630. Residues serine 640 to glycine 657 are compositionally biased toward low complexity. A compositionally biased stretch (polar residues) spans asparagine 737–glycine 747. 4 stretches are compositionally biased toward low complexity: residues asparagine 752–alanine 780, glutamine 872–glutamine 942, glycine 949–cysteine 965, and glutamine 1040–glutamine 1052. Residues serine 894 to lysine 1601 are mediates association to the membrane and rescricts the microtubule-inhibiting activity to the cell cortex. A compositionally biased stretch (basic and acidic residues) spans glutamine 1053–valine 1071. Residues valine 1125–lysine 1291 form the SEC7 domain. Residues valine 1332–alanine 1445 enclose the PH domain. Positions leucine 1544–lysine 1601 are disordered. Over residues threonine 1568–asparagine 1579 the composition is skewed to polar residues.

It belongs to the PSD family. As to quaternary structure, interacts (via MTED motif) with tubulin. As to expression, expressed in the head (at protein level).

It localises to the cell projection. Its subcellular location is the axon. The protein resides in the cytoplasm. It is found in the cell membrane. The protein localises to the cell cortex. In terms of biological role, guanine nucleotide exchange factor for Arf6. Regulates axon growth and branching by inhibiting microtubule polymerisation at the cortex. Together with shot, promotes axonal microtubule bundle integrity. Required for normal ethanol-induced tolerance and preference. Probably by activating Arf6, counteracts ethanol-induced sedation. The sequence is that of PH and SEC7 domain-containing protein from Drosophila melanogaster (Fruit fly).